Here is a 199-residue protein sequence, read N- to C-terminus: Protein-methionine-sulfoxide reductase heme-binding subunit MsrQ (199 aa).

4 helical membrane passes run 10-30 (WLKV…FWAI), 82-102 (LWCF…ELGI), 116-136 (PYLT…LTST), and 153-173 (VVYL…KILS).

It belongs to the MsrQ family. As to quaternary structure, heterodimer of a catalytic subunit (MsrP) and a heme-binding subunit (MsrQ). Requires FMN as cofactor. It depends on heme b as a cofactor.

The protein localises to the cell inner membrane. Part of the MsrPQ system that repairs oxidized periplasmic proteins containing methionine sulfoxide residues (Met-O), using respiratory chain electrons. Thus protects these proteins from oxidative-stress damage caused by reactive species of oxygen and chlorine generated by the host defense mechanisms. MsrPQ is essential for the maintenance of envelope integrity under bleach stress, rescuing a wide series of structurally unrelated periplasmic proteins from methionine oxidation, including the primary periplasmic chaperone SurA and the lipoprotein Pal. MsrQ provides electrons for reduction to the reductase catalytic subunit MsrP, using the quinone pool of the respiratory chain. This is Protein-methionine-sulfoxide reductase heme-binding subunit MsrQ from Salmonella agona (strain SL483).